The chain runs to 318 residues: Probable RNA methyltransferase At5g51130 (318 aa).

2 disordered regions span residues 1–61 (MGRD…NQEV) and 146–184 (NSTK…DSAE). Basic and acidic residues predominate over residues 16 to 34 (RSNENEKSVEKVVANEEKV). The span at 37 to 52 (QQKQKQQQGQQGNCNQ) shows a compositional bias: low complexity. The region spanning 82–318 (DPRLKVLKKE…FDRQILAFQK (237 aa)) is the Bin3-type SAM domain.

This sequence belongs to the methyltransferase superfamily.

In terms of biological role, probable RNA methyltransferase. This Arabidopsis thaliana (Mouse-ear cress) protein is Probable RNA methyltransferase At5g51130.